The primary structure comprises 312 residues: DNA-directed RNA polymerase subunit alpha (312 aa).

The segment at methionine 1–aspartate 226 is alpha N-terminal domain (alpha-NTD). Residues asparagine 243 to aspartate 312 form an alpha C-terminal domain (alpha-CTD) region.

Belongs to the RNA polymerase alpha chain family. Homodimer. The RNAP catalytic core consists of 2 alpha, 1 beta, 1 beta' and 1 omega subunit. When a sigma factor is associated with the core the holoenzyme is formed, which can initiate transcription.

The enzyme catalyses RNA(n) + a ribonucleoside 5'-triphosphate = RNA(n+1) + diphosphate. DNA-dependent RNA polymerase catalyzes the transcription of DNA into RNA using the four ribonucleoside triphosphates as substrates. The polypeptide is DNA-directed RNA polymerase subunit alpha (Lactobacillus gasseri (strain ATCC 33323 / DSM 20243 / BCRC 14619 / CIP 102991 / JCM 1131 / KCTC 3163 / NCIMB 11718 / NCTC 13722 / AM63)).